The primary structure comprises 1370 residues: Zinc finger MYM-type protein 3 (1370 aa).

Low complexity-rich tracts occupy residues 1-12 (MDPSDFPSPFDP), 40-56 (APSR…SSGA), and 130-146 (GAGA…EPLA). Disordered stretches follow at residues 1-73 (MDPS…PGGV) and 85-310 (GLLY…MGTK). Over residues 227–255 (TGKEIEKPPERVQKRSERVRRAEPPKPEV) the composition is skewed to basic and acidic residues. 2 positions are modified to phosphoserine: S265 and S269. The span at 265–281 (SDEDSDAMVDDPNDEDF) shows a compositional bias: acidic residues. Residues K310, K322, and K330 each participate in a glycyl lysine isopeptide (Lys-Gly) (interchain with G-Cter in SUMO2) cross-link. 9 consecutive MYM-type zinc fingers follow at residues 334–368 (QLFC…TKDS), 380–424 (HEFC…LHEV), 431–466 (HRLC…RPGG), 479–513 (KRFC…FEML), 523–561 (SLFC…PCYY), 569–606 (YQFC…KPEV), 614–648 (FQFC…HEKL), 655–694 (KSFC…GVTE), and 701–735 (WDFC…LETI). A compositionally biased stretch (polar residues) spans 761–789 (NLDTQSGPESLLNSQSSESKPQTPSQTKV). The tract at residues 761–831 (NLDTQSGPES…PPPPATPRKN (71 aa)) is disordered. Glycyl lysine isopeptide (Lys-Gly) (interchain with G-Cter in SUMO2) cross-links involve residues K780 and K788. The segment covering 790 to 799 (ENNHTVRTPD) has biased composition (basic and acidic residues). T797 is modified (phosphothreonine). K806 participates in a covalent cross-link: Glycyl lysine isopeptide (Lys-Gly) (interchain with G-Cter in SUMO2). The span at 816–827 (VPTPPPPPPPAT) shows a compositional bias: pro residues. Residues T818 and T827 each carry the phosphothreonine modification. Residues K848, K862, K921, and K1276 each participate in a glycyl lysine isopeptide (Lys-Gly) (interchain with G-Cter in SUMO2) cross-link.

In terms of assembly, may be a component of a BHC histone deacetylase complex that contains HDAC1, HDAC2, HMG20B/BRAF35, KDM1A, RCOR1/CoREST, PHF21A/BHC80, ZMYM2, ZNF217, ZMYM3, GSE1 and GTF2I. Ubiquitously expressed in all embryonic stages and adult tissues.

It localises to the nucleus. Functionally, plays a role in the regulation of cell morphology and cytoskeletal organization. In Mus musculus (Mouse), this protein is Zinc finger MYM-type protein 3 (Zmym3).